A 48-amino-acid chain; its full sequence is GYYYPYHGGHYYGAHYGGYPYGHFYNYRHTPYYSGLRYYGSYGYPHHF.

The sequence is that of Cuticle protein 6 isoform b from Limulus polyphemus (Atlantic horseshoe crab).